The sequence spans 338 residues: Anthranilate phosphoribosyltransferase (338 aa).

Residues glycine 78, glycine 81–aspartate 82, threonine 86, asparagine 88–threonine 91, lysine 106–serine 114, and serine 118 each bind 5-phospho-alpha-D-ribose 1-diphosphate. Glycine 78 is a binding site for anthranilate. Mg(2+) is bound at residue serine 90. Asparagine 109 lines the anthranilate pocket. Arginine 164 contacts anthranilate. Mg(2+) contacts are provided by aspartate 223 and glutamate 224.

Belongs to the anthranilate phosphoribosyltransferase family. In terms of assembly, homodimer. Requires Mg(2+) as cofactor.

The catalysed reaction is N-(5-phospho-beta-D-ribosyl)anthranilate + diphosphate = 5-phospho-alpha-D-ribose 1-diphosphate + anthranilate. It participates in amino-acid biosynthesis; L-tryptophan biosynthesis; L-tryptophan from chorismate: step 2/5. Its function is as follows. Catalyzes the transfer of the phosphoribosyl group of 5-phosphorylribose-1-pyrophosphate (PRPP) to anthranilate to yield N-(5'-phosphoribosyl)-anthranilate (PRA). The protein is Anthranilate phosphoribosyltransferase of Bacillus licheniformis (strain ATCC 14580 / DSM 13 / JCM 2505 / CCUG 7422 / NBRC 12200 / NCIMB 9375 / NCTC 10341 / NRRL NRS-1264 / Gibson 46).